The chain runs to 331 residues: tRNA(Ile)-lysidine synthase (331 aa).

ATP is bound at residue 29-34; sequence SGGPDS.

The protein belongs to the tRNA(Ile)-lysidine synthase family.

The protein resides in the cytoplasm. It catalyses the reaction cytidine(34) in tRNA(Ile2) + L-lysine + ATP = lysidine(34) in tRNA(Ile2) + AMP + diphosphate + H(+). Functionally, ligates lysine onto the cytidine present at position 34 of the AUA codon-specific tRNA(Ile) that contains the anticodon CAU, in an ATP-dependent manner. Cytidine is converted to lysidine, thus changing the amino acid specificity of the tRNA from methionine to isoleucine. The polypeptide is tRNA(Ile)-lysidine synthase (Chlorobaculum tepidum (strain ATCC 49652 / DSM 12025 / NBRC 103806 / TLS) (Chlorobium tepidum)).